The primary structure comprises 296 residues: uncharacterized protein (296 aa).

The helical transmembrane segment at 7-26 threads the bilayer; sequence CFSLVCALGASTYLLWRGWL.

The protein resides in the membrane. This is an uncharacterized protein from Treponema pallidum (strain Nichols).